The chain runs to 28 residues: Nicotinic acetylcholine receptor-binding protein Mnn-3C (28 aa).

Cys-3 and Cys-24 are joined by a disulfide.

Belongs to the three-finger toxin family. Short-chain subfamily. As to expression, expressed by the venom gland.

The protein resides in the secreted. In terms of biological role, binds and may inhibit nicotinic acetylcholine receptors (nAChR). This is Nicotinic acetylcholine receptor-binding protein Mnn-3C from Micrurus nigrocinctus (Central American coral snake).